We begin with the raw amino-acid sequence, 1042 residues long: Elongation factor 3 (1042 aa).

6 HEAT repeats span residues Lys9–Thr46, Pro86–Pro124, Tyr167–Asn204, Asp206–Ala242, Ser243–Asp280, and Pro289–Gly327. ABC transporter domains are found at residues Glu425–Ile642 and Cys668–Glu994. ADP-binding residues include Asn704, Glu923, Asn926, and His952. The tract at residues Lys1009–Asp1042 is disordered. Residues Arg1020–Lys1031 show a composition bias toward basic residues.

It belongs to the ABC transporter superfamily. ABCF family. EF3 subfamily. In terms of assembly, monomer.

The protein resides in the cytoplasm. The catalysed reaction is ATP + H2O = ADP + phosphate + H(+). It participates in protein biosynthesis; polypeptide chain elongation. Functionally, ribosome-dependent ATPase that functions in cytoplasmic translation elongation. Required for the ATP-dependent release of deacylated tRNA from the ribosomal E-site during protein biosynthesis. Stimulates the eEF1A-dependent binding of aminoacyl-tRNA to the ribosomal A-site, which has reduced affinity for tRNA as long as the E-site is occupied. Assists translation termination by stimulating the release of nascent protein from the ribosome by release factors. The polypeptide is Elongation factor 3 (TEF3) (Pneumocystis carinii).